Reading from the N-terminus, the 72-residue chain is uncharacterized protein (72 aa).

This is an uncharacterized protein from Vaccinia virus (strain Western Reserve) (VACV).